The primary structure comprises 235 residues: MSSGRIAPLVFPAASQHTATVIFVHGLGDTGHGWASAVENWRRRQKMDEVKFILPHAPQIPISVNMGMRMPGWFDIKQLGGDVDSLIRNEDTEGIKLSQKYFHNLIQQEIDSGIVPERIVLGGFSQGGAMSLLAGLTCTSKLGGILGLSSWLLLSKTFADMVKPTDANRQTPVMMFHGEEDPIVPCERGKLSAELLKGLGYDVAWKTYPGMGHSAVPEELDEVEAFLRKQLPPKN.

Residues S125, D181, and H213 each act as charge relay system in the active site.

Belongs to the AB hydrolase superfamily. AB hydrolase 2 family.

Its subcellular location is the cytoplasm. The protein resides in the nucleus. The catalysed reaction is S-hexadecanoyl-L-cysteinyl-[protein] + H2O = L-cysteinyl-[protein] + hexadecanoate + H(+). In terms of biological role, hydrolyzes fatty acids from S-acylated cysteine residues in proteins with a strong preference for palmitoylated G-alpha proteins over other acyl substrates. Mediates the deacylation of G-alpha proteins such as GPA1 in vivo, but has weak or no activity toward palmitoylated Ras proteins. Has weak lysophospholipase activity in vitro; however such activity may not exist in vivo. In Gibberella zeae (strain ATCC MYA-4620 / CBS 123657 / FGSC 9075 / NRRL 31084 / PH-1) (Wheat head blight fungus), this protein is Acyl-protein thioesterase 1.